The sequence spans 205 residues: Ribonuclease HII (205 aa).

The RNase H type-2 domain occupies 14–205 (ERICGIDEAG…SFKVRRLNEA (192 aa)). A divalent metal cation contacts are provided by D20, E21, and D117.

It belongs to the RNase HII family. Mn(2+) is required as a cofactor. The cofactor is Mg(2+).

The protein resides in the cytoplasm. The enzyme catalyses Endonucleolytic cleavage to 5'-phosphomonoester.. Endonuclease that specifically degrades the RNA of RNA-DNA hybrids. The polypeptide is Ribonuclease HII (Chlorobium phaeovibrioides (strain DSM 265 / 1930) (Prosthecochloris vibrioformis (strain DSM 265))).